The following is a 363-amino-acid chain: Trichocyst matrix protein T4-A (363 aa).

The N-terminal stretch at 1–17 is a signal peptide; it reads MARSLTILAIVFAVATA. Positions 18–52 are excised as a propeptide; sequence RVTKSESPKEILAQVNKDSFGNSILSVLQLQLATG. A coiled-coil region spans residues 85-119; sequence VAFEKIIADLEQEIAYHQTQIVALSNLRDSTTEAL. Positions 190–221 are excised as a propeptide; it reads RFEKVQAKLMESKHALFKPLINALTQLASKVD. Residues 244–352 adopt a coiled-coil conformation; that stretch reads ASLLATEERQ…EVLTQKLSAA (109 aa).

The protein belongs to the TMP family. Post-translationally, two components are produced by post-translational processing from the precursor peptide.

It is found in the trichocyst. In terms of biological role, structural protein that crystallize inside the trichocyst matrix. This chain is Trichocyst matrix protein T4-A (T4A), found in Paramecium tetraurelia.